A 133-amino-acid polypeptide reads, in one-letter code: Nickel-responsive regulator (133 aa).

Residues histidine 76, histidine 87, histidine 89, and cysteine 95 each coordinate Ni(2+).

The protein belongs to the transcriptional regulatory CopG/NikR family. In terms of assembly, homotetramer. Ni(2+) is required as a cofactor.

Transcriptional repressor of the nikABCDE operon. Is active in the presence of excessive concentrations of intracellular nickel. The chain is Nickel-responsive regulator from Escherichia coli (strain SE11).